Reading from the N-terminus, the 267-residue chain is S-adenosylmethionine decarboxylase proenzyme (267 aa).

The Schiff-base intermediate with substrate; via pyruvic acid role is filled by Ser-114. Ser-114 carries the post-translational modification Pyruvic acid (Ser); by autocatalysis. His-119 (proton acceptor; for processing activity) is an active-site residue. The Proton donor; for catalytic activity role is filled by Cys-142.

It belongs to the prokaryotic AdoMetDC family. Type 2 subfamily. As to quaternary structure, heterooctamer of four alpha and four beta chains arranged as a tetramer of alpha/beta heterodimers. Pyruvate is required as a cofactor. In terms of processing, is synthesized initially as an inactive proenzyme. Formation of the active enzyme involves a self-maturation process in which the active site pyruvoyl group is generated from an internal serine residue via an autocatalytic post-translational modification. Two non-identical subunits are generated from the proenzyme in this reaction, and the pyruvate is formed at the N-terminus of the alpha chain, which is derived from the carboxyl end of the proenzyme. The post-translation cleavage follows an unusual pathway, termed non-hydrolytic serinolysis, in which the side chain hydroxyl group of the serine supplies its oxygen atom to form the C-terminus of the beta chain, while the remainder of the serine residue undergoes an oxidative deamination to produce ammonia and the pyruvoyl group blocking the N-terminus of the alpha chain.

The enzyme catalyses S-adenosyl-L-methionine + H(+) = S-adenosyl 3-(methylsulfanyl)propylamine + CO2. The protein operates within amine and polyamine biosynthesis; S-adenosylmethioninamine biosynthesis; S-adenosylmethioninamine from S-adenosyl-L-methionine: step 1/1. Functionally, catalyzes the decarboxylation of S-adenosylmethionine to S-adenosylmethioninamine (dcAdoMet), the propylamine donor required for the synthesis of the polyamines spermine and spermidine from the diamine putrescine. This Erwinia tasmaniensis (strain DSM 17950 / CFBP 7177 / CIP 109463 / NCPPB 4357 / Et1/99) protein is S-adenosylmethionine decarboxylase proenzyme.